The sequence spans 196 residues: ATP-dependent Clp protease proteolytic subunit (196 aa).

Catalysis depends on Ser101, which acts as the Nucleophile. The active site involves His126.

The protein belongs to the peptidase S14 family. As to quaternary structure, component of the chloroplastic Clp protease core complex.

It localises to the plastid. It is found in the chloroplast stroma. It catalyses the reaction Hydrolysis of proteins to small peptides in the presence of ATP and magnesium. alpha-casein is the usual test substrate. In the absence of ATP, only oligopeptides shorter than five residues are hydrolyzed (such as succinyl-Leu-Tyr-|-NHMec, and Leu-Tyr-Leu-|-Tyr-Trp, in which cleavage of the -Tyr-|-Leu- and -Tyr-|-Trp bonds also occurs).. Functionally, cleaves peptides in various proteins in a process that requires ATP hydrolysis. Has a chymotrypsin-like activity. Plays a major role in the degradation of misfolded proteins. The protein is ATP-dependent Clp protease proteolytic subunit of Aethionema cordifolium (Lebanon stonecress).